Here is a 159-residue protein sequence, read N- to C-terminus: Keratin-associated protein 9-8 (159 aa).

A run of 15 repeats spans residues 8–12 (CCQPT), 13–17 (CCRTT), 32–36 (CCQPS), 37–41 (CCVSS), 46–50 (CCRPT), 51–55 (CCQNT), 56–60 (CCQPI), 65–69 (CCQPS), 70–74 (CCSTP), 75–79 (CCQPT), 80–84 (CCGQT), 129–133 (CCRPA), 134–138 (CCETT), 139–142 (CCRT), and 153–157 (CCQPS). The 15 X 5 AA repeats of C-C-[RQVSGE]-[SPSNQ]-[TASPI] stretch occupies residues 8–157 (CCQPTCCRTT…TCVSSCCQPS (150 aa)).

The protein belongs to the KRTAP type 9 family. Interacts with hair keratins.

Functionally, in the hair cortex, hair keratin intermediate filaments are embedded in an interfilamentous matrix, consisting of hair keratin-associated proteins (KRTAP), which are essential for the formation of a rigid and resistant hair shaft through their extensive disulfide bond cross-linking with abundant cysteine residues of hair keratins. The matrix proteins include the high-sulfur and high-glycine-tyrosine keratins. The chain is Keratin-associated protein 9-8 (KRTAP9-8) from Homo sapiens (Human).